Here is a 540-residue protein sequence, read N- to C-terminus: MTTEIQLELEQAVNQRRNFAIISHPDAGKTTLTEKLLLYGGAIHQAGAVKARRDQRKATSDWMEMEKQRGISITSTVLQFDYKNIQINLLDTPGHQDFSEDTYRTLAAADNAVMLIDAAKGLEPQTRKLFEVCKLRALPIFTFVNKLDRPGREPLELLDEIEQELGLQIYAVNWPIGIGDRFKGVYDRRSKAIHLFERRAHGSQEAQETVIQLGDPKIEEYLEQDLYYQLKEDLEILEEIGADLDLEKVHSGQMTPIFFGSAMTNFGVKLFLEAFLDYALKPIGRNSSVGLVDPSYPEFSGFVFKLQANMDPKHRDRVAFVRVCTGKFEKDMTVNHARTGKTVRLSRPQKLFAQDRASIEEAYPGDVIGLNNPGVFAIGDTIYNGKKLEYEGIPCFSPELFSYLKNPNPSKFKQFQKGIQELTEEGAIQIMFSTDDFIRDPILAAVGQLQFEVVQFRMLSEYGVETRLEPLSYSLARWVAGGWKAIEEAGRIFNTMTVKDGWGRPVLLFKNEWNLQQVKEDHPKLELTSIAPVGSGIQPS.

Residues 14–283 (NQRRNFAIIS…AFLDYALKPI (270 aa)) enclose the tr-type G domain. GTP contacts are provided by residues 23 to 30 (SHPDAGKT), 91 to 95 (DTPGH), and 145 to 148 (NKLD).

It belongs to the TRAFAC class translation factor GTPase superfamily. Classic translation factor GTPase family. PrfC subfamily.

It localises to the cytoplasm. Its function is as follows. Increases the formation of ribosomal termination complexes and stimulates activities of RF-1 and RF-2. It binds guanine nucleotides and has strong preference for UGA stop codons. It may interact directly with the ribosome. The stimulation of RF-1 and RF-2 is significantly reduced by GTP and GDP, but not by GMP. The chain is Peptide chain release factor 3 from Gloeothece citriformis (strain PCC 7424) (Cyanothece sp. (strain PCC 7424)).